Reading from the N-terminus, the 568-residue chain is Sphingosine-1-phosphate lyase 1 (568 aa).

The Lumenal portion of the chain corresponds to Met1–Gln41. A helical; Signal-anchor for type III membrane protein membrane pass occupies residues Leu42–Gln62. Topologically, residues Pro63 to His568 are cytoplasmic. An N6-(pyridoxal phosphate)lysine; alternate modification is found at Lys353. N6-acetyllysine; alternate is present on Lys353. 3'-nitrotyrosine occurs at positions 356 and 366. Residue Ser564 is modified to Phosphoserine.

The protein belongs to the group II decarboxylase family. Sphingosine-1-phosphate lyase subfamily. In terms of assembly, homodimer. Pyridoxal 5'-phosphate serves as cofactor.

The protein localises to the endoplasmic reticulum membrane. The catalysed reaction is sphinganine 1-phosphate = hexadecanal + phosphoethanolamine. It catalyses the reaction sphing-4-enine 1-phosphate = (2E)-hexadecenal + phosphoethanolamine. The protein operates within lipid metabolism; sphingolipid metabolism. In terms of biological role, cleaves phosphorylated sphingoid bases (PSBs), such as sphingosine-1-phosphate, into fatty aldehydes and phosphoethanolamine. Elevates stress-induced ceramide production and apoptosis. Required for global lipid homeostasis in liver and cholesterol homeostasis in fibroblasts. Involved in the regulation of pro-inflammatory response and neutrophil trafficking. Modulates neuronal autophagy via phosphoethanolamine production which regulates accumulation of aggregate-prone proteins such as APP. Seems to play a role in establishing neuronal contact sites and axonal maintenance. The chain is Sphingosine-1-phosphate lyase 1 from Pongo abelii (Sumatran orangutan).